We begin with the raw amino-acid sequence, 445 residues long: Exodeoxyribonuclease 7 large subunit (445 aa).

Belongs to the XseA family. Heterooligomer composed of large and small subunits.

The protein resides in the cytoplasm. The catalysed reaction is Exonucleolytic cleavage in either 5'- to 3'- or 3'- to 5'-direction to yield nucleoside 5'-phosphates.. Functionally, bidirectionally degrades single-stranded DNA into large acid-insoluble oligonucleotides, which are then degraded further into small acid-soluble oligonucleotides. The polypeptide is Exodeoxyribonuclease 7 large subunit (Xanthomonas oryzae pv. oryzae (strain MAFF 311018)).